The sequence spans 333 residues: Beta-ketoacyl-[acyl-carrier-protein] synthase III (333 aa).

Active-site residues include cysteine 116 and histidine 258. An ACP-binding region spans residues 259–263 (QANQR). The active site involves asparagine 288.

It belongs to the thiolase-like superfamily. FabH family. In terms of assembly, homodimer.

It localises to the cytoplasm. The catalysed reaction is malonyl-[ACP] + acetyl-CoA + H(+) = 3-oxobutanoyl-[ACP] + CO2 + CoA. The protein operates within lipid metabolism; fatty acid biosynthesis. Functionally, catalyzes the condensation reaction of fatty acid synthesis by the addition to an acyl acceptor of two carbons from malonyl-ACP. Catalyzes the first condensation reaction which initiates fatty acid synthesis and may therefore play a role in governing the total rate of fatty acid production. Possesses both acetoacetyl-ACP synthase and acetyl transacylase activities. Its substrate specificity determines the biosynthesis of branched-chain and/or straight-chain of fatty acids. This Microcystis aeruginosa (strain NIES-843 / IAM M-2473) protein is Beta-ketoacyl-[acyl-carrier-protein] synthase III.